The primary structure comprises 326 residues: Interleukin-1-binding protein (326 aa).

The N-terminal stretch at methionine 1–valine 18 is a signal peptide. Ig-like domains are found at residues proline 24–threonine 115, serine 122–lysine 212, and proline 221–threonine 322. Cysteine 48 and cysteine 99 are disulfide-bonded. N-linked (GlcNAc...) asparagine; by host glycosylation is found at asparagine 80, asparagine 103, and asparagine 113. Cysteine 143 and cysteine 194 form a disulfide bridge. N-linked (GlcNAc...) asparagine; by host glycans are attached at residues asparagine 206 and asparagine 237. A disulfide bridge connects residues cysteine 242 and cysteine 309.

Belongs to the interleukin-1 receptor family. Interacts with mouse Il1b.

The protein localises to the secreted. May reduce the host inflammatory response by interacting with inteleukin-1 beta (Il1b) and thus decreasing the association between IL1B and its cellular receptor. This is Interleukin-1-binding protein (OPG201) from Vaccinia virus (strain Western Reserve) (VACV).